The primary structure comprises 677 residues: Elongation factor G 2 (677 aa).

The 276-residue stretch at 8 to 283 (SRIRNIGIIA…AVVNFLPSPE (276 aa)) folds into the tr-type G domain. GTP contacts are provided by residues 17–24 (AHIDAGKT), 81–85 (DTPGH), and 135–138 (NKMD).

The protein belongs to the TRAFAC class translation factor GTPase superfamily. Classic translation factor GTPase family. EF-G/EF-2 subfamily.

It localises to the cytoplasm. Catalyzes the GTP-dependent ribosomal translocation step during translation elongation. During this step, the ribosome changes from the pre-translocational (PRE) to the post-translocational (POST) state as the newly formed A-site-bound peptidyl-tRNA and P-site-bound deacylated tRNA move to the P and E sites, respectively. Catalyzes the coordinated movement of the two tRNA molecules, the mRNA and conformational changes in the ribosome. The sequence is that of Elongation factor G 2 from Syntrophus aciditrophicus (strain SB).